The following is a 122-amino-acid chain: Small ribosomal subunit protein bS6 (122 aa).

The protein belongs to the bacterial ribosomal protein bS6 family.

Functionally, binds together with bS18 to 16S ribosomal RNA. The sequence is that of Small ribosomal subunit protein bS6 from Vibrio cholerae serotype O1 (strain ATCC 39541 / Classical Ogawa 395 / O395).